We begin with the raw amino-acid sequence, 528 residues long: MSQSSSDGQRQPAIVILDFGSQYSELIARRVRETEVFSVVLGYSTSAEELRAMQPKGIVLSGGPSSVYAEHAPLCDPAIWELGIPVLGVCYGMQLMVQQLGGVVEAASGKAEYGKAPLEVDDPTDLLTNVTGGSTMWMSHGDSVKALPEGFVRLAHTANTPEAAVAHLQRRLYGVQFHPEVVHSTCGMALIRNFVYHICGCEPDWTTSAFIDEAVAVVREQVGEKRVLLALSGGVDSSTLAFLLKKAIGDQLTCMFIDQGFMRKGEPEFLMDFFDRKFNIHVEYINARQRFISKLKGITDPEEKRKIIGTEFIRVFEEESKRLGPFDYLAQGTLYPDVIESAGTNVDPKTGERVAVKIKSHHNVGGLPKDLQFKLVEPLRKLFKDEVRKVGRALGLPEEIVRRHPFPGPGLAIRILGEVTDEKLNCLRDADLIVREEIREAGLYHEIWQAFAVLLPVRSVGVMGDKRTYAWPIVLRCVSSEDGMTADWSRLPYDLMETISNRIVNEVKGVNRVVLDITSKPPGTIEWE.

The Glutamine amidotransferase type-1 domain occupies Ala13–Asp204. Residue Cys90 is the Nucleophile of the active site. Active-site residues include His178 and Glu180. The 199-residue stretch at Trp205 to Arg403 folds into the GMPS ATP-PPase domain. Ser232–Ser238 contributes to the ATP binding site.

As to quaternary structure, homodimer.

The enzyme catalyses XMP + L-glutamine + ATP + H2O = GMP + L-glutamate + AMP + diphosphate + 2 H(+). It participates in purine metabolism; GMP biosynthesis; GMP from XMP (L-Gln route): step 1/1. Its function is as follows. Catalyzes the synthesis of GMP from XMP. This Parasynechococcus marenigrum (strain WH8102) protein is GMP synthase [glutamine-hydrolyzing].